A 176-amino-acid polypeptide reads, in one-letter code: ATP-dependent protease subunit HslV (176 aa).

Residue Thr6 is part of the active site. Residues Ser161, Cys164, and Thr167 each contribute to the Na(+) site.

Belongs to the peptidase T1B family. HslV subfamily. A double ring-shaped homohexamer of HslV is capped on each side by a ring-shaped HslU homohexamer. The assembly of the HslU/HslV complex is dependent on binding of ATP.

Its subcellular location is the cytoplasm. The enzyme catalyses ATP-dependent cleavage of peptide bonds with broad specificity.. Its activity is regulated as follows. Allosterically activated by HslU binding. Functionally, protease subunit of a proteasome-like degradation complex believed to be a general protein degrading machinery. The polypeptide is ATP-dependent protease subunit HslV (Thermosipho melanesiensis (strain DSM 12029 / CIP 104789 / BI429)).